We begin with the raw amino-acid sequence, 122 residues long: Large ribosomal subunit protein uL14 (122 aa).

This sequence belongs to the universal ribosomal protein uL14 family. In terms of assembly, part of the 50S ribosomal subunit. Forms a cluster with proteins L3 and L19. In the 70S ribosome, L14 and L19 interact and together make contacts with the 16S rRNA in bridges B5 and B8.

Functionally, binds to 23S rRNA. Forms part of two intersubunit bridges in the 70S ribosome. The chain is Large ribosomal subunit protein uL14 from Paracidovorax citrulli (strain AAC00-1) (Acidovorax citrulli).